The sequence spans 235 residues: 7-cyano-7-deazaguanine synthase (235 aa).

12–22 (FSGGQDSTTCL) provides a ligand contact to ATP. Zn(2+) is bound by residues Cys-200, Cys-215, Cys-218, and Cys-221.

It belongs to the QueC family. Zn(2+) is required as a cofactor.

The enzyme catalyses 7-carboxy-7-deazaguanine + NH4(+) + ATP = 7-cyano-7-deazaguanine + ADP + phosphate + H2O + H(+). It participates in purine metabolism; 7-cyano-7-deazaguanine biosynthesis. In terms of biological role, catalyzes the ATP-dependent conversion of 7-carboxy-7-deazaguanine (CDG) to 7-cyano-7-deazaguanine (preQ(0)). This is 7-cyano-7-deazaguanine synthase from Leptothrix cholodnii (strain ATCC 51168 / LMG 8142 / SP-6) (Leptothrix discophora (strain SP-6)).